The chain runs to 314 residues: 4-hydroxy-3-methylbut-2-enyl diphosphate reductase (314 aa).

Cysteine 12 provides a ligand contact to [4Fe-4S] cluster. Histidine 41 and histidine 74 together coordinate (2E)-4-hydroxy-3-methylbut-2-enyl diphosphate. The dimethylallyl diphosphate site is built by histidine 41 and histidine 74. Isopentenyl diphosphate is bound by residues histidine 41 and histidine 74. Position 96 (cysteine 96) interacts with [4Fe-4S] cluster. Residue histidine 124 participates in (2E)-4-hydroxy-3-methylbut-2-enyl diphosphate binding. Histidine 124 is a binding site for dimethylallyl diphosphate. Histidine 124 is a binding site for isopentenyl diphosphate. Catalysis depends on glutamate 126, which acts as the Proton donor. A (2E)-4-hydroxy-3-methylbut-2-enyl diphosphate-binding site is contributed by threonine 167. [4Fe-4S] cluster is bound at residue cysteine 197. (2E)-4-hydroxy-3-methylbut-2-enyl diphosphate contacts are provided by serine 225, serine 226, asparagine 227, and serine 269. Dimethylallyl diphosphate is bound by residues serine 225, serine 226, asparagine 227, and serine 269. 4 residues coordinate isopentenyl diphosphate: serine 225, serine 226, asparagine 227, and serine 269.

The protein belongs to the IspH family. Requires [4Fe-4S] cluster as cofactor.

The enzyme catalyses isopentenyl diphosphate + 2 oxidized [2Fe-2S]-[ferredoxin] + H2O = (2E)-4-hydroxy-3-methylbut-2-enyl diphosphate + 2 reduced [2Fe-2S]-[ferredoxin] + 2 H(+). It carries out the reaction dimethylallyl diphosphate + 2 oxidized [2Fe-2S]-[ferredoxin] + H2O = (2E)-4-hydroxy-3-methylbut-2-enyl diphosphate + 2 reduced [2Fe-2S]-[ferredoxin] + 2 H(+). It functions in the pathway isoprenoid biosynthesis; dimethylallyl diphosphate biosynthesis; dimethylallyl diphosphate from (2E)-4-hydroxy-3-methylbutenyl diphosphate: step 1/1. It participates in isoprenoid biosynthesis; isopentenyl diphosphate biosynthesis via DXP pathway; isopentenyl diphosphate from 1-deoxy-D-xylulose 5-phosphate: step 6/6. In terms of biological role, catalyzes the conversion of 1-hydroxy-2-methyl-2-(E)-butenyl 4-diphosphate (HMBPP) into a mixture of isopentenyl diphosphate (IPP) and dimethylallyl diphosphate (DMAPP). Acts in the terminal step of the DOXP/MEP pathway for isoprenoid precursor biosynthesis. This is 4-hydroxy-3-methylbut-2-enyl diphosphate reductase from Histophilus somni (strain 2336) (Haemophilus somnus).